Here is a 577-residue protein sequence, read N- to C-terminus: Arginine--tRNA ligase (577 aa).

Residues 122–132 (PNVAKEMHVGH) carry the 'HIGH' region motif.

This sequence belongs to the class-I aminoacyl-tRNA synthetase family. As to quaternary structure, monomer.

The protein localises to the cytoplasm. It catalyses the reaction tRNA(Arg) + L-arginine + ATP = L-arginyl-tRNA(Arg) + AMP + diphosphate. This is Arginine--tRNA ligase from Escherichia coli O7:K1 (strain IAI39 / ExPEC).